Reading from the N-terminus, the 405-residue chain is Tryptophan synthase beta chain (405 aa).

At Lys-95 the chain carries N6-(pyridoxal phosphate)lysine.

It belongs to the TrpB family. Tetramer of two alpha and two beta chains. Pyridoxal 5'-phosphate serves as cofactor.

The enzyme catalyses (1S,2R)-1-C-(indol-3-yl)glycerol 3-phosphate + L-serine = D-glyceraldehyde 3-phosphate + L-tryptophan + H2O. Its pathway is amino-acid biosynthesis; L-tryptophan biosynthesis; L-tryptophan from chorismate: step 5/5. In terms of biological role, the beta subunit is responsible for the synthesis of L-tryptophan from indole and L-serine. This is Tryptophan synthase beta chain from Pseudomonas putida (strain ATCC 700007 / DSM 6899 / JCM 31910 / BCRC 17059 / LMG 24140 / F1).